We begin with the raw amino-acid sequence, 33 residues long: Non-specific lipid-transfer protein (33 aa).

Residues cysteine 14 and cysteine 29 are joined by a disulfide bond.

This sequence belongs to the plant LTP family. As to quaternary structure, dimer.

Its function is as follows. Plant non-specific lipid-transfer proteins transfer phospholipids as well as galactolipids across membranes. May play a role in wax or cutin deposition in the cell walls of expanding epidermal cells and certain secretory tissues. Has antibacterial activity against Gram-positive bacteria S.aureus and S.epidermidis and blocks biofilm formation. In a mouse model, also protects against bacterial sepsis and has an anti-inflammatory effect. Exhibits antinociceptive activity upon oral or intraperitoneal application in mice. This Morinda citrifolia (Indian mulberry) protein is Non-specific lipid-transfer protein.